Reading from the N-terminus, the 364-residue chain is Probable 7-methylxanthine methyltransferase 5 (364 aa).

Y19 contributes to the S-adenosyl-L-homocysteine binding site. T26 serves as a coordination point for theobromine. S-adenosyl-L-homocysteine is bound by residues C64, Q69, D101, L102, S134, and F135. 3 residues coordinate theobromine: Y152, H155, and W156. 4 residues coordinate Mg(2+): N172, D258, F260, and N261. Residue F314 coordinates theobromine.

This sequence belongs to the methyltransferase superfamily. Type-7 methyltransferase family. The cofactor is Mg(2+).

It catalyses the reaction 7-methylxanthine + S-adenosyl-L-methionine = theobromine + S-adenosyl-L-homocysteine + H(+). Its pathway is alkaloid biosynthesis. In terms of biological role, involved in the biosynthesis of theobromine. The protein is Probable 7-methylxanthine methyltransferase 5 of Theobroma cacao (Cacao).